Here is a 278-residue protein sequence, read N- to C-terminus: Energy-coupling factor transporter ATP-binding protein EcfA1 (278 aa).

The ABC transporter domain occupies 5 to 240 (IEVRNLKYKY…EDLEELGLDQ (236 aa)). An ATP-binding site is contributed by 40–47 (GHNGSGKS).

It belongs to the ABC transporter superfamily. Energy-coupling factor EcfA family. In terms of assembly, forms a stable energy-coupling factor (ECF) transporter complex composed of 2 membrane-embedded substrate-binding proteins (S component), 2 ATP-binding proteins (A component) and 2 transmembrane proteins (T component).

The protein resides in the cell membrane. ATP-binding (A) component of a common energy-coupling factor (ECF) ABC-transporter complex. Unlike classic ABC transporters this ECF transporter provides the energy necessary to transport a number of different substrates. The chain is Energy-coupling factor transporter ATP-binding protein EcfA1 from Streptococcus sanguinis (strain SK36).